We begin with the raw amino-acid sequence, 224 residues long: Glutathione S-transferase Mu 5 (224 aa).

One can recognise a GST N-terminal domain in the interval K4–G91. At S5 the chain carries Phosphoserine. Glutathione-binding positions include Y10–W11, W49–K53, N62–L63, and Q75–S76. One can recognise a GST C-terminal domain in the interval T93–I211. Y119 lines the substrate pocket.

Belongs to the GST superfamily. Mu family. As to quaternary structure, homodimer. Interacts with PFKM isoform 2 and isoform 3 (via N-terminal testis-specific region).

The protein localises to the cytoplasm. It carries out the reaction RX + glutathione = an S-substituted glutathione + a halide anion + H(+). In terms of biological role, conjugation of reduced glutathione to a wide number of exogenous and endogenous hydrophobic electrophiles. The sequence is that of Glutathione S-transferase Mu 5 (Gstm5) from Mus musculus (Mouse).